Consider the following 210-residue polypeptide: Thiamine-phosphate synthase (210 aa).

4-amino-2-methyl-5-(diphosphooxymethyl)pyrimidine contacts are provided by residues Gln38–Lys42 and Asn70. The Mg(2+) site is built by Asp71 and Asp90. Ser107 is a binding site for 4-amino-2-methyl-5-(diphosphooxymethyl)pyrimidine. Thr132–Thr134 contributes to the 2-[(2R,5Z)-2-carboxy-4-methylthiazol-5(2H)-ylidene]ethyl phosphate binding site. 4-amino-2-methyl-5-(diphosphooxymethyl)pyrimidine is bound at residue Lys135. Ile183–Ser184 is a binding site for 2-[(2R,5Z)-2-carboxy-4-methylthiazol-5(2H)-ylidene]ethyl phosphate.

This sequence belongs to the thiamine-phosphate synthase family. Requires Mg(2+) as cofactor.

The enzyme catalyses 2-[(2R,5Z)-2-carboxy-4-methylthiazol-5(2H)-ylidene]ethyl phosphate + 4-amino-2-methyl-5-(diphosphooxymethyl)pyrimidine + 2 H(+) = thiamine phosphate + CO2 + diphosphate. The catalysed reaction is 2-(2-carboxy-4-methylthiazol-5-yl)ethyl phosphate + 4-amino-2-methyl-5-(diphosphooxymethyl)pyrimidine + 2 H(+) = thiamine phosphate + CO2 + diphosphate. It catalyses the reaction 4-methyl-5-(2-phosphooxyethyl)-thiazole + 4-amino-2-methyl-5-(diphosphooxymethyl)pyrimidine + H(+) = thiamine phosphate + diphosphate. Its pathway is cofactor biosynthesis; thiamine diphosphate biosynthesis; thiamine phosphate from 4-amino-2-methyl-5-diphosphomethylpyrimidine and 4-methyl-5-(2-phosphoethyl)-thiazole: step 1/1. Condenses 4-methyl-5-(beta-hydroxyethyl)thiazole monophosphate (THZ-P) and 2-methyl-4-amino-5-hydroxymethyl pyrimidine pyrophosphate (HMP-PP) to form thiamine monophosphate (TMP). The polypeptide is Thiamine-phosphate synthase (Archaeoglobus fulgidus (strain ATCC 49558 / DSM 4304 / JCM 9628 / NBRC 100126 / VC-16)).